A 590-amino-acid polypeptide reads, in one-letter code: Synaptotagmin-3 (590 aa).

At 1–54 (MSGDYEDDLCRRALILVSDLCARVRDADTNDRCQEFNDRIRGYPRGPDADISVS) the chain is on the vesicular side. The cysteine motif stretch occupies residues 10–34 (CRRALILVSDLCARVRDADTNDRCQ). The helical transmembrane segment at 55 to 75 (LLSVIVTFCGIVLLGVSLFVS) threads the bilayer. Over 76–590 (WKLCWVPWRD…KGLSEKENSE (515 aa)) the chain is Cytoplasmic. Disordered stretches follow at residues 143 to 220 (AELL…VTSL), 234 to 260 (TQQT…LPGG), and 273 to 295 (ELYQ…GEAG). A compositionally biased stretch (low complexity) spans 185 to 203 (SPELPSEGGAGSGLLLLPP). A compositionally biased stretch (polar residues) spans 234–243 (TQQTLTSQPD). Residues 278-295 (TGPGGRRSGGGPGSGEAG) show a composition bias toward gly residues. Arginine 284 carries the post-translational modification Omega-N-methylarginine. 2 consecutive C2 domains span residues 299–420 (PCGR…PLWR) and 431–565 (DLGE…EHWH). Ca(2+) contacts are provided by aspartate 330, aspartate 336, aspartate 388, phenylalanine 389, aspartate 390, serine 393, aspartate 396, aspartate 462, aspartate 468, aspartate 522, and aspartate 524.

It belongs to the synaptotagmin family. As to quaternary structure, homodimer; disulfide-linked via the cysteine motif. Can also form heterodimers with SYT6, SYT9 and SYT10. Ca(2+) serves as cofactor. Expressed in melanocytes.

The protein resides in the cell membrane. The protein localises to the cytoplasmic vesicle. It is found in the secretory vesicle membrane. Functionally, ca(2+) sensor involved in Ca(2+)-dependent exocytosis of secretory vesicles through Ca(2+) and phospholipid binding to the C2 domain. Ca(2+) induces binding of the C2-domains to phospholipid membranes and to assembled SNARE-complexes; both actions contribute to triggering exocytosis. Plays a role in dendrite formation by melanocytes. This chain is Synaptotagmin-3 (SYT3), found in Homo sapiens (Human).